We begin with the raw amino-acid sequence, 95 residues long: Large ribosomal subunit protein bL25 (95 aa).

Belongs to the bacterial ribosomal protein bL25 family. In terms of assembly, part of the 50S ribosomal subunit; part of the 5S rRNA/L5/L18/L25 subcomplex. Contacts the 5S rRNA. Binds to the 5S rRNA independently of L5 and L18.

This is one of the proteins that binds to the 5S RNA in the ribosome where it forms part of the central protuberance. In Chromobacterium violaceum (strain ATCC 12472 / DSM 30191 / JCM 1249 / CCUG 213 / NBRC 12614 / NCIMB 9131 / NCTC 9757 / MK), this protein is Large ribosomal subunit protein bL25.